The following is a 372-amino-acid chain: L-selectin (372 aa).

Residues 1 to 28 (MIFPRKCQSTQRDLWNIFKLWGWTMLCC) form the signal peptide. A propeptide spanning residues 29-38 (DFLAHHGTDC) is cleaved from the precursor. At 39–332 (WTYHYSENPM…FSMIKEGDYN (294 aa)) the chain is on the extracellular side. The region spanning 55-155 (RFCRENYTDL…ACHKPKAALC (101 aa)) is the C-type lectin domain. 10 disulfide bridges follow: Cys57–Cys155, Cys128–Cys147, Cys128–Cys160, Cys160–Cys171, Cys165–Cys180, Cys182–Cys191, Cys197–Cys241, Cys227–Cys254, Cys259–Cys303, and Cys289–Cys316. Asn60 and Asn104 each carry an N-linked (GlcNAc...) asparagine glycan. Residues Glu118, Asn120, Glu126, Asn143, and Asp144 each coordinate Ca(2+). One can recognise an EGF-like domain in the interval 156–192 (YTASCQPWSCSGHGECVEIINNYTCNCDVGYYGPQCQ). Asn177 is a glycosylation site (N-linked (GlcNAc...) asparagine). 2 consecutive Sushi domains span residues 195–256 (IQCE…TCQV) and 257–318 (IQCE…ICQK). Asn226, Asn232, Asn246, and Asn271 each carry an N-linked (GlcNAc...) asparagine glycan. A helical membrane pass occupies residues 333-355 (PLFIPVAVIVTAFSGLAFIIWLA). Over 356-372 (RRLKKGKKSKKSMDDPY) the chain is Cytoplasmic.

This sequence belongs to the selectin/LECAM family. Interaction with SELPLG/PSGL1 and PODXL2 is required for promoting recruitment and rolling of leukocytes. This interaction is dependent on the sialyl Lewis X glycan modification of SELPLG and PODXL2, and tyrosine sulfation modifications of SELPLG. Sulfation on 'Tyr-51' of SELPLG is important for L-selectin binding. Post-translationally, N-glycosylated.

Its subcellular location is the cell membrane. Functionally, calcium-dependent lectin that mediates cell adhesion by binding to glycoproteins on neighboring cells. Mediates the adherence of lymphocytes to endothelial cells of high endothelial venules in peripheral lymph nodes. Promotes initial tethering and rolling of leukocytes in endothelia. This Papio hamadryas (Hamadryas baboon) protein is L-selectin (SELL).